The following is a 37-amino-acid chain: Cytochrome b6-f complex subunit 5 (37 aa).

A helical membrane pass occupies residues 5–25; the sequence is LLSGIVPGLIPITLAGSFVIA.

This sequence belongs to the PetG family. As to quaternary structure, the 4 large subunits of the cytochrome b6-f complex are cytochrome b6, subunit IV (17 kDa polypeptide, PetD), cytochrome f and the Rieske protein, while the 4 small subunits are PetG, PetL, PetM and PetN. The complex functions as a dimer.

It is found in the plastid membrane. Functionally, component of the cytochrome b6-f complex, which mediates electron transfer between photosystem II (PSII) and photosystem I (PSI), cyclic electron flow around PSI, and state transitions. PetG is required for either the stability or assembly of the cytochrome b6-f complex. The chain is Cytochrome b6-f complex subunit 5 from Aneura mirabilis (Parasitic liverwort).